The sequence spans 234 residues: HTH-type transcriptional regulator ArcR (234 aa).

Residue 40-129 (VRHYTKGQVI…MAFLCKANDD (90 aa)) coordinates a nucleoside 3',5'-cyclic phosphate. Residues 155–228 (KFAKDRIIKL…HKNWLVSKHL (74 aa)) enclose the HTH crp-type domain. A DNA-binding region (H-T-H motif) is located at residues 188–207 (IQLMSDMAGISRETAGHIIH).

It is found in the cytoplasm. Functionally, positively regulates the expression of the arcABDCR operon under anaerobic conditions, thus playing an essential role in arginine catabolism. May also control the expression of genes encoding proteins which are involved in anaerobic metabolism. Can bind cyclic AMP. This chain is HTH-type transcriptional regulator ArcR (arcR), found in Staphylococcus aureus (strain USA300 / TCH1516).